Here is a 62-residue protein sequence, read N- to C-terminus: Large ribosomal subunit protein eL37 (62 aa).

Zn(2+) is bound by residues cysteine 20, cysteine 23, cysteine 35, and cysteine 38. Residues 20–38 (CRRCGRHSFNVAKGYCAAC) form a C4-type zinc finger.

Belongs to the eukaryotic ribosomal protein eL37 family. The cofactor is Zn(2+).

In terms of biological role, binds to the 23S rRNA. This Desulfurococcus amylolyticus (strain DSM 18924 / JCM 16383 / VKM B-2413 / 1221n) (Desulfurococcus kamchatkensis) protein is Large ribosomal subunit protein eL37.